Reading from the N-terminus, the 378-residue chain is tRNA (guanine(26)-N(2))-dimethyltransferase (378 aa).

The 371-residue stretch at 4–374 (KEVTEGKVRI…KGYEEIIRCV (371 aa)) folds into the Trm1 methyltransferase domain. Positions 44, 69, 87, 114, and 115 each coordinate S-adenosyl-L-methionine. Zn(2+) contacts are provided by C246, C249, C263, and C266.

It belongs to the class I-like SAM-binding methyltransferase superfamily. Trm1 family.

It carries out the reaction guanosine(26) in tRNA + 2 S-adenosyl-L-methionine = N(2)-dimethylguanosine(26) in tRNA + 2 S-adenosyl-L-homocysteine + 2 H(+). Its function is as follows. Dimethylates a single guanine residue at position 26 of a number of tRNAs using S-adenosyl-L-methionine as donor of the methyl groups. This Saccharolobus islandicus (strain Y.G.57.14 / Yellowstone #1) (Sulfolobus islandicus) protein is tRNA (guanine(26)-N(2))-dimethyltransferase.